Here is a 62-residue protein sequence, read N- to C-terminus: Large ribosomal subunit protein bL28 (62 aa).

The interval 1-22 (MGKQCFVTGRKASTGNRRSHAL) is disordered.

The protein belongs to the bacterial ribosomal protein bL28 family.

This is Large ribosomal subunit protein bL28 from Staphylococcus aureus (strain N315).